Here is a 750-residue protein sequence, read N- to C-terminus: Alpha-galactosidase C (750 aa).

An N-terminal signal peptide occupies residues 1-26; that stretch reads MFRSTATVAAATAMGLLTATGHGSLA. N-linked (GlcNAc...) asparagine glycans are attached at residues Asn-58, Asn-162, Asn-186, Asn-194, Asn-366, Asn-428, Asn-432, and Asn-453. The active-site Nucleophile is Asp-511. Asp-573 (proton donor) is an active-site residue.

Belongs to the glycosyl hydrolase 36 family. In terms of assembly, homotetramer. It depends on Mg(2+) as a cofactor. Requires NAD(+) as cofactor.

The protein localises to the secreted. The enzyme catalyses Hydrolysis of terminal, non-reducing alpha-D-galactose residues in alpha-D-galactosides, including galactose oligosaccharides, galactomannans and galactolipids.. In terms of biological role, hydrolyzes a variety of simple alpha-D-galactoside as well as more complex molecules such as oligosaccharides and polysaccharides. Active on paranitrophenyl-alpha-galactoside, raffinose, locust bean gum and gum guar. In Emericella nidulans (strain FGSC A4 / ATCC 38163 / CBS 112.46 / NRRL 194 / M139) (Aspergillus nidulans), this protein is Alpha-galactosidase C (aglC).